Consider the following 440-residue polypeptide: Stromal membrane-associated protein 1 (440 aa).

Residues 18–143 form the Arf-GAP domain; it reads QLILSKLLRE…IAITNKEKEK (126 aa). A C4-type zinc finger spans residues 33 to 56; the sequence is CADCEAKGPRWASWNIGVFICIRC. 2 stretches are compositionally biased toward basic and acidic residues: residues 140 to 158 and 165 to 178; these read EKEK…EKPA and KLPK…EPKK. Disordered regions lie at residues 140–211 and 410–440; these read EKEK…PATA and NASA…QLWK. The Interaction with clathrin heavy chains signature appears at 192-196; it reads LLGLD. Residues 420–440 are compositionally biased toward low complexity; the sequence is STTAGWSGSSSGQTLSTQLWK.

In terms of assembly, interacts with ARF6. Interacts with clathrin heavy chains via the clathrin box-like motif. Detected in adult brain, lung, heart, liver, ovary and bone marrow. Detected in stromal cells of the red pulp of adult spleen.

Its subcellular location is the cell membrane. GTPase activating protein that acts on ARF6. Plays a role in clathrin-dependent endocytosis. May play a role in erythropoiesis. The protein is Stromal membrane-associated protein 1 (Smap1) of Mus musculus (Mouse).